A 324-amino-acid chain; its full sequence is Elongation factor Ts, mitochondrial (324 aa).

The N-terminal 44 residues, Met1–Ser44, are a transit peptide targeting the mitochondrion. Lys75 and Lys132 each carry N6-succinyllysine. Phosphoserine is present on Ser269.

This sequence belongs to the EF-Ts family.

Its subcellular location is the mitochondrion. Associates with the EF-Tu.GDP complex and induces the exchange of GDP to GTP. It remains bound to the aminoacyl-tRNA.EF-Tu.GTP complex up to the GTP hydrolysis stage on the ribosome. This chain is Elongation factor Ts, mitochondrial (Tsfm), found in Rattus norvegicus (Rat).